A 205-amino-acid chain; its full sequence is MATPLGWSQGGSGSVCLAFDQLRDVIESQEELIHQLRNVMVLQDENFVSKEEFQEVEKKLVDEKAAHAKTKALLAKEEEKLQFALGEVEVLSKQLEKEKMAFEKALSSVKSRVLQESSKKDQLITKCNEIESHIIKQEDILNGKENEIKELQQVISQQRQSFRNHMSDFRIQKQQETYMAQVLDQKHKKTSGTRRARSRQCSREK.

A coiled-coil region spans residues 17–166; the sequence is LAFDQLRDVI…QQRQSFRNHM (150 aa). The interval 138-185 is required for interaction with CBX5 and TBPL1; that stretch reads EDILNGKENEIKELQQVISQQRQSFRNHMSDFRIQKQQETYMAQVLDQ. Positions 182–205 are disordered; that stretch reads VLDQKHKKTSGTRRARSRQCSREK. The span at 186–205 shows a compositional bias: basic residues; that stretch reads KHKKTSGTRRARSRQCSREK.

The protein belongs to the SPATA24 family. In terms of assembly, homodimer. Interacts with CBX3, CBX5, GMNN, GTF2B, TBPL1 and the polycomb proteins PHCF2, RNF2 and SCMH1 but not with CBX1 or PCGF2. Highly expressed in the testis and is mainly localized in the spermatids. Also expressed in the lung, heart, spleen and epididymis.

Its subcellular location is the cytoplasm. It is found in the nucleus. The protein localises to the nucleolus. The protein resides in the nucleoplasm. Its function is as follows. Binds DNA with high affinity but does not bind to TATA boxes. Synergises with GMNN and TBP in activation of TATA box-containing promoters and with GMNN and TBPL1 in activation of the NF1 TATA-less promoter. May play a role in cytoplasm movement and removal during spermiogenesis. The sequence is that of Spermatogenesis-associated protein 24 (Spata24) from Rattus norvegicus (Rat).